The primary structure comprises 317 residues: UDP-3-O-acylglucosamine N-acyltransferase (317 aa).

Residue H229 is the Proton acceptor of the active site.

It belongs to the transferase hexapeptide repeat family. LpxD subfamily. As to quaternary structure, homotrimer.

It carries out the reaction a UDP-3-O-[(3R)-3-hydroxyacyl]-alpha-D-glucosamine + a (3R)-hydroxyacyl-[ACP] = a UDP-2-N,3-O-bis[(3R)-3-hydroxyacyl]-alpha-D-glucosamine + holo-[ACP] + H(+). Its pathway is bacterial outer membrane biogenesis; LPS lipid A biosynthesis. Catalyzes the N-acylation of UDP-3-O-acylglucosamine using 3-hydroxyacyl-ACP as the acyl donor. Is involved in the biosynthesis of lipid A, a phosphorylated glycolipid that anchors the lipopolysaccharide to the outer membrane of the cell. The chain is UDP-3-O-acylglucosamine N-acyltransferase from Campylobacter concisus (strain 13826).